The chain runs to 422 residues: Probable metallocarboxypeptidase A (422 aa).

Residues 1-17 (MRSVLSLALLAVNVVTA) form the signal peptide. Residues 18–112 (AVVAPFDYSG…FEAYSAGYAP (95 aa)) constitute a propeptide, activation peptide. The region spanning 119–419 (SYHSYQDHLS…AGTVAMLKAV (301 aa)) is the Peptidase M14 domain. Residues H179 and E182 each contribute to the Zn(2+) site. Substrate is bound by residues 179–182 (HARE), R237, and 254–255 (NR). C248 and C271 form a disulfide bridge. H309 contributes to the Zn(2+) binding site. A substrate-binding site is contributed by 310 to 311 (SY). E385 serves as the catalytic Proton donor/acceptor.

It belongs to the peptidase M14 family. The cofactor is Zn(2+).

The protein localises to the secreted. In terms of biological role, extracellular metalloprotease that contributes to pathogenicity. The protein is Probable metallocarboxypeptidase A (MCPA) of Trichophyton verrucosum (strain HKI 0517).